Consider the following 675-residue polypeptide: Protein kintoun (675 aa).

Disordered stretches follow at residues 98-131, 265-293, 310-340, and 509-659; these read ASKK…KQGA, AGEG…TAPP, EGGA…AVAK, and EAAH…AAPT. Basic and acidic residues predominate over residues 102–113; that stretch reads QQQEQEKQEKEQ. Residues 279 to 293 are compositionally biased toward low complexity; it reads VPGVPDLPGAKTAPP. Positions 529–543 are enriched in low complexity; sequence AAAASSGAAPAPAAA. Residues 544-553 are compositionally biased toward acidic residues; that stretch reads SEEEEEEDKE. The span at 564 to 577 shows a compositional bias: low complexity; sequence DPAAAAAAAGASSG. Over residues 579-596 the composition is skewed to basic and acidic residues; it reads ELTENERKWRELHARQQQ. Composition is skewed to low complexity over residues 604–617 and 628–659; these read AAEA…AAAE and VAQG…AAPT.

The protein belongs to the PIH1 family. Kintoun subfamily.

The protein localises to the cytoplasm. Required for cytoplasmic pre-assembly of axonemal dyneins, thereby playing a central role in motility in cilia and flagella. Involved in pre-assembly of dynein arm complexes in the cytoplasm before intraflagellar transport loads them for the ciliary compartment. The polypeptide is Protein kintoun (pf13) (Chlamydomonas reinhardtii (Chlamydomonas smithii)).